A 228-amino-acid polypeptide reads, in one-letter code: uncharacterized protein (228 aa).

The Response regulatory domain maps to 5–119 (HILIVEDEEK…ELLARIRAAL (115 aa)). Aspartate 54 is subject to 4-aspartylphosphate. The segment at residues 130 to 228 (GTFLTYDDLR…IRGVGYAIKG (99 aa)) is a DNA-binding region (ompR/PhoB-type).

In terms of processing, phosphorylated by YkoH.

It localises to the cytoplasm. Probable member of the two-component regulatory system YkoH/YkoG. This is an uncharacterized protein from Bacillus subtilis (strain 168).